The primary structure comprises 475 residues: 23S rRNA (uracil(1939)-C(5))-methyltransferase RlmD (475 aa).

The TRAM domain maps to 1–76; that stretch reads MHRGDKPVNI…SRFSKAKVRE (76 aa). Residues Cys89, Cys95, Cys98, and Cys178 each contribute to the [4Fe-4S] cluster site. S-adenosyl-L-methionine contacts are provided by Gln299, Phe328, Asn333, Glu349, Asp377, and Asp398. The Nucleophile role is filled by Cys431.

This sequence belongs to the class I-like SAM-binding methyltransferase superfamily. RNA M5U methyltransferase family. RlmD subfamily.

The catalysed reaction is uridine(1939) in 23S rRNA + S-adenosyl-L-methionine = 5-methyluridine(1939) in 23S rRNA + S-adenosyl-L-homocysteine + H(+). Its function is as follows. Catalyzes the formation of 5-methyl-uridine at position 1939 (m5U1939) in 23S rRNA. The polypeptide is 23S rRNA (uracil(1939)-C(5))-methyltransferase RlmD (Polynucleobacter necessarius subsp. necessarius (strain STIR1)).